The chain runs to 289 residues: Acetylglutamate kinase (289 aa).

Residues 65–66, R87, and N187 each bind substrate; that span reads GG.

Belongs to the acetylglutamate kinase family. ArgB subfamily.

It localises to the cytoplasm. It catalyses the reaction N-acetyl-L-glutamate + ATP = N-acetyl-L-glutamyl 5-phosphate + ADP. Its pathway is amino-acid biosynthesis; L-arginine biosynthesis; N(2)-acetyl-L-ornithine from L-glutamate: step 2/4. Functionally, catalyzes the ATP-dependent phosphorylation of N-acetyl-L-glutamate. This Chromobacterium violaceum (strain ATCC 12472 / DSM 30191 / JCM 1249 / CCUG 213 / NBRC 12614 / NCIMB 9131 / NCTC 9757 / MK) protein is Acetylglutamate kinase.